The primary structure comprises 435 residues: S-phase entry cyclin-5 (435 aa).

Disordered regions lie at residues 36–70 (KRALSKNDSSSKQQVQDSKPRRALTDVPVNNNPLS) and 104–126 (NDRTAAEQEEEEEEEGEDDDAAS). Positions 41-52 (KNDSSSKQQVQD) are enriched in low complexity. A compositionally biased stretch (acidic residues) spans 110–124 (EQEEEEEEEGEDDDA).

It belongs to the cyclin family. Cyclin AB subfamily.

In terms of biological role, required for efficient progression through S phase and possibly for the normal progression through meiosis. Interacts with CDC28. This chain is S-phase entry cyclin-5 (CLB5), found in Saccharomyces cerevisiae (strain ATCC 204508 / S288c) (Baker's yeast).